The chain runs to 71 residues: Small ribosomal subunit protein bS21 (71 aa).

Residues 34–44 (RREHYEKPTSE) show a composition bias toward basic and acidic residues. The interval 34 to 71 (RREHYEKPTSERKRKKAAAVKRHAKKLSRDNARRTRLY) is disordered. Positions 45 to 59 (RKRKKAAAVKRHAKK) are enriched in basic residues. A compositionally biased stretch (basic and acidic residues) spans 60-71 (LSRDNARRTRLY).

It belongs to the bacterial ribosomal protein bS21 family.

This Idiomarina loihiensis (strain ATCC BAA-735 / DSM 15497 / L2-TR) protein is Small ribosomal subunit protein bS21.